A 595-amino-acid chain; its full sequence is Phenylalanine--tRNA ligase beta subunit (595 aa).

Residues K86–P90 form a 3'-CCA residue in tRNA region. The B5 domain occupies F292–K370. Mg(2+)-binding residues include D348, D354, E357, and D358.

The protein belongs to the phenylalanyl-tRNA synthetase beta subunit family. Type 2 subfamily. As to quaternary structure, tetramer of two alpha and two beta subunits. The cofactor is Mg(2+).

It is found in the cytoplasm. It carries out the reaction tRNA(Phe) + L-phenylalanine + ATP = L-phenylalanyl-tRNA(Phe) + AMP + diphosphate + H(+). The sequence is that of Phenylalanine--tRNA ligase beta subunit (FRS1) from Saccharomyces cerevisiae (strain ATCC 204508 / S288c) (Baker's yeast).